A 367-amino-acid chain; its full sequence is Splicing factor U2AF-associated protein 2 (367 aa).

The interval 36–104 is disordered; it reads YDPNSLKMNK…SKSENSEASP (69 aa). Over residues 61-78 the composition is skewed to basic and acidic residues; it reads TEGKESSNGEDRHTKRLY. RRM domains are found at residues 112–193 and 268–329; these read VYIQ…KMRV and LLID…VVEA.

The protein belongs to the HTATSF1 family. In terms of assembly, interacts with the U2AF large and U2AF small subunits.

Functionally, has a role in pre-mRNA splicing. The chain is Splicing factor U2AF-associated protein 2 (uap2) from Schizosaccharomyces pombe (strain 972 / ATCC 24843) (Fission yeast).